The primary structure comprises 88 residues: Alpha-latrotoxin associated low molecular weight protein 2 (88 aa).

An N-terminal signal peptide occupies residues 1–19 (MLKLICIVFLVTVLTFVVG). Cystine bridges form between cysteine 30–cysteine 66, cysteine 46–cysteine 62, and cysteine 49–cysteine 75.

The protein belongs to the arthropod CHH/MIH/GIH/VIH hormone family. As to expression, expressed by the venom gland.

It is found in the secreted. Its function is as follows. May increase the toxicity of alpha-latrotoxin and/or other venom components. Is non-toxic to mice and to the cockroach Periplaneta americana. The chain is Alpha-latrotoxin associated low molecular weight protein 2 from Latrodectus geometricus (Brown widow spider).